The sequence spans 333 residues: Transcription factor HHO6 (333 aa).

The HTH myb-type domain maps to 189-249 (ALRKQRRCWN…HLQKYRLHIR (61 aa)). A DNA-binding region (H-T-H motif) is located at residues 220–245 (PKQIREHMQEEGLTNDEVKSHLQKYR). The interval 274–333 (DEEETCEGGESLKRSNAQSDSPQGPLQLPSTTTTTGGDSSMEDVEDAKSESFQLERLRSP) is disordered. Residues 287–303 (RSNAQSDSPQGPLQLPS) show a composition bias toward polar residues. A compositionally biased stretch (basic and acidic residues) spans 319 to 333 (DAKSESFQLERLRSP).

The protein localises to the nucleus. In terms of biological role, probable transcription factor involved in phosphate signaling in roots. This chain is Transcription factor HHO6, found in Arabidopsis thaliana (Mouse-ear cress).